A 509-amino-acid chain; its full sequence is SH2 domain-containing adapter protein B (509 aa).

Disordered stretches follow at residues 1 to 103 and 144 to 178; these read MAKW…GSSL and SGAG…EVRY. A mediates interaction with LAT, PTK2/FAK1, JAK1 and JAK3 region spans residues 1–410; the sequence is MAKWLNKYFS…PAVPLEKQIW (410 aa). Over residues 44–61 the composition is skewed to low complexity; it reads VPQASSAASASCGPATAS. Over residues 62 to 79 the composition is skewed to polar residues; it reads CFSASSGSLPDDSGSTSD. S102 is subject to Phosphoserine. A compositionally biased stretch (low complexity) spans 144-158; sequence SGAGAAASSSSSSGS. A Glycyl lysine isopeptide (Lys-Gly) (interchain with G-Cter in SUMO2) cross-link involves residue K187. The disordered stretch occupies residues 229–385; sequence AEESGAGKKD…APGGGFKPIK (157 aa). 2 stretches are compositionally biased toward basic and acidic residues: residues 233-242 and 250-262; these read GAGKKDKVTI and FDAK…KAGK. Phosphoserine is present on residues S307 and S317. Over residues 307–317 the composition is skewed to polar residues; sequence SVDSDSESTVS. Residues 319–334 show a composition bias toward basic and acidic residues; the sequence is RLRESKLPQDDDRPAD. A Phosphoserine modification is found at S388. The SH2 domain occupies 410 to 504; the sequence is WYHGAISRGD…AEHLSLLYPV (95 aa).

Interacts with PTPN11. Interacts with phosphorylated 'Tyr-720' of the ligand-activated receptor PDGFRA via its SH2 domain. Interacts with the ligand-activated receptors PDGFRB, FGFR1, KDR/VEGFR2, IL2RB and IL2RG. Interacts with EPS8 and V-SRC. Interacts with GRB2 and GRAP. Interacts with CD3Z. Interacts with tyrosine-phosphorylated LAT upon T-cell antigen receptor activation. Interacts with PLCG1. Interacts with ZAP70, LCP2/SLP-76, VAV1 and GRAP2. Interacts with JAK1 and JAK3. Interacts with PTK2/FAK1. Interacts with CRK/CrKII. Interacts with IRS2. Phosphorylated upon PDGFRA, PDGFRB, TCR, IL2 receptor, FGFR1 or VEGFR2 activation. As to expression, widely expressed.

It is found in the cytoplasm. The protein resides in the cell membrane. Its function is as follows. Adapter protein which regulates several signal transduction cascades by linking activated receptors to downstream signaling components. May play a role in angiogenesis by regulating FGFR1, VEGFR2 and PDGFR signaling. May also play a role in T-cell antigen receptor/TCR signaling, interleukin-2 signaling, apoptosis and neuronal cells differentiation by mediating basic-FGF and NGF-induced signaling cascades. May also regulate IRS1 and IRS2 signaling in insulin-producing cells. In Homo sapiens (Human), this protein is SH2 domain-containing adapter protein B (SHB).